The chain runs to 209 residues: Ion-translocating oxidoreductase complex subunit G (209 aa).

A helical membrane pass occupies residues Ala9 to Leu29. Thr175 is subject to FMN phosphoryl threonine.

It belongs to the RnfG family. As to quaternary structure, the complex is composed of six subunits: RnfA, RnfB, RnfC, RnfD, RnfE and RnfG. FMN is required as a cofactor.

The protein resides in the cell inner membrane. Its function is as follows. Part of a membrane-bound complex that couples electron transfer with translocation of ions across the membrane. The sequence is that of Ion-translocating oxidoreductase complex subunit G from Pectobacterium atrosepticum (strain SCRI 1043 / ATCC BAA-672) (Erwinia carotovora subsp. atroseptica).